The sequence spans 179 residues: MKQFLDFLPLVVFFAFYKIYDIYAATAALIVATAIVLIYSWVRFRKVEKMALITFVLVVVFGGLTLFFHNDEFIKWKVTVIYALFAGALLVSQWVMKKPLIQRMLGKELTLPQPVWSKLNLAWAVFFILCGLANIYIAFWLPQNIWVNFKVFGLTALTLIFTLLSGIYIYRHMPQEDKS.

The next 5 helical transmembrane spans lie at 22 to 42 (IYAA…YSWV), 50 to 70 (MALI…FFHN), 76 to 96 (WKVT…QWVM), 121 to 141 (LAWA…AFWL), and 149 to 169 (FKVF…GIYI).

This sequence belongs to the YciB family.

It localises to the cell inner membrane. Its function is as follows. Plays a role in cell envelope biogenesis, maintenance of cell envelope integrity and membrane homeostasis. The polypeptide is Inner membrane-spanning protein YciB (Shigella boydii serotype 18 (strain CDC 3083-94 / BS512)).